We begin with the raw amino-acid sequence, 442 residues long: 26S proteasome non-ATPase regulatory subunit 12 homolog A (442 aa).

The stretch at 6–137 (KLEATIDRLL…EAADLMQEVA (132 aa)) forms a coiled coil. Residues 232–403 (EICRSYKAIY…GIVCFQIAKD (172 aa)) form the PCI domain.

It belongs to the proteasome subunit p55 family. Component of the 19S regulatory particle (RP/PA700) lid subcomplex of the 26S proteasome. The 26S proteasome is composed of a core protease (CP), known as the 20S proteasome, capped at one or both ends by the 19S regulatory particle (RP/PA700). The RP/PA700 complex is composed of at least 17 different subunits in two subcomplexes, the base and the lid, which form the portions proximal and distal to the 20S proteolytic core, respectively. Ubiquitous with highest expression in flowers.

Its subcellular location is the cytoplasm. It is found in the nucleus. Its function is as follows. Acts as a regulatory subunit of the 26 proteasome which is involved in the ATP-dependent degradation of ubiquitinated proteins. Required for gametogenesis and sporophyte development. Acts redundantly with RPN5B. This Arabidopsis thaliana (Mouse-ear cress) protein is 26S proteasome non-ATPase regulatory subunit 12 homolog A (RPN5A).